Reading from the N-terminus, the 97-residue chain is MKRICSVYKSPRKSEMYLYVDKREALSRVPEALLVPFGAPQHVFDLLLTPERQLAREDVAKVLENIEKQGFHLQMPPGEEEYIEHLPEELLRMNDPL.

Residues 3–87 (RICSVYKSPR…GEEEYIEHLP (85 aa)) form the YcgL domain.

This chain is YcgL domain-containing protein PA1295, found in Pseudomonas aeruginosa (strain ATCC 15692 / DSM 22644 / CIP 104116 / JCM 14847 / LMG 12228 / 1C / PRS 101 / PAO1).